A 270-amino-acid chain; its full sequence is MFSELDLLDFATFDGGATTEAAFASPANQTYDLSSSVPSSVSNMGTVSPQELLLHEPYLSAPSSTALTALTSPSLFDGSPDFDTFDISPNFGHSDLENPDTWFSLFPDATPLPQAQAQVQTQPQTQTQTEQQTQPLPELVQSVQPTVQPTVEQTVHSVEASPATPSEDLEVLSPGSGHQRRKSSVSPPSGRHSSVAGVGSRRRDKPLPPIIVEDPSDVVAMKRARNTLAARKSRERKAQRLEELEAKIEELIAERDRWKNLALAHGASTE.

Disordered regions lie at residues glutamine 114–proline 135 and glutamine 153–glutamate 213. Over residues serine 184–valine 195 the composition is skewed to low complexity. Positions serine 216–glutamate 270 constitute a bZIP domain. Positions lysine 222 to arginine 240 are basic motif. The leucine-zipper stretch occupies residues leucine 241 to isoleucine 248.

This sequence belongs to the bZIP family. GCN4 subfamily. As to quaternary structure, binds DNA as a dimer.

The protein localises to the nucleus. In terms of biological role, in N.crassa grown under amino acid starvation conditions, this protein is required for increasing the transcription of the genes coding for many amino acid biosynthetic pathways enzymes. This transcription factor binds and recognize the DNA sequence: 5'-TGACTC-3'. This chain is Cross-pathway control protein 1 (cpc-1), found in Neurospora crassa (strain ATCC 24698 / 74-OR23-1A / CBS 708.71 / DSM 1257 / FGSC 987).